The primary structure comprises 544 residues: Chaperonin GroEL 1 (544 aa).

ATP contacts are provided by residues 29–32 (TLGP), 86–90 (DGTTT), glycine 413, 479–481 (NAA), and aspartate 495. The interval 525–544 (PEPKDNAPAGAGAGGGDFDY) is disordered. Over residues 535 to 544 (AGAGGGDFDY) the composition is skewed to gly residues.

It belongs to the chaperonin (HSP60) family. In terms of assembly, forms a cylinder of 14 subunits composed of two heptameric rings stacked back-to-back. Interacts with the co-chaperonin GroES.

The protein resides in the cytoplasm. The enzyme catalyses ATP + H2O + a folded polypeptide = ADP + phosphate + an unfolded polypeptide.. Together with its co-chaperonin GroES, plays an essential role in assisting protein folding. The GroEL-GroES system forms a nano-cage that allows encapsulation of the non-native substrate proteins and provides a physical environment optimized to promote and accelerate protein folding. The protein is Chaperonin GroEL 1 of Nostoc sp. (strain PCC 7120 / SAG 25.82 / UTEX 2576).